The sequence spans 209 residues: Glycerol-3-phosphate acyltransferase (209 aa).

The next 5 membrane-spanning stretches (helical) occupy residues 8-28 (NVLF…YILA), 78-98 (VLVL…LIGI), 124-144 (VLLV…LIVA), 149-169 (ISSL…FIVH), and 170-190 (PDMP…IIFY).

It belongs to the PlsY family. In terms of assembly, probably interacts with PlsX.

The protein resides in the cell inner membrane. It catalyses the reaction an acyl phosphate + sn-glycerol 3-phosphate = a 1-acyl-sn-glycero-3-phosphate + phosphate. The protein operates within lipid metabolism; phospholipid metabolism. Its function is as follows. Catalyzes the transfer of an acyl group from acyl-phosphate (acyl-PO(4)) to glycerol-3-phosphate (G3P) to form lysophosphatidic acid (LPA). This enzyme utilizes acyl-phosphate as fatty acyl donor, but not acyl-CoA or acyl-ACP. The chain is Glycerol-3-phosphate acyltransferase from Nitratiruptor sp. (strain SB155-2).